Reading from the N-terminus, the 65-residue chain is MFLTTANLAKAKSKTILVQMVSAAGTGYFFNTKRNRLRDKLVLRKHDPVVNKHVLFFEKKKIRSI.

The transit peptide at 1 to 8 (MFLTTANL) directs the protein to the mitochondrion.

The protein belongs to the bacterial ribosomal protein bL33 family. Component of the mitochondrial ribosome large subunit (39S) which comprises a 16S rRNA and about 50 distinct proteins.

The protein localises to the mitochondrion. The polypeptide is Large ribosomal subunit protein bL33m (mrpl33) (Tetraodon nigroviridis (Spotted green pufferfish)).